The primary structure comprises 146 residues: 3-dehydroquinate dehydratase (146 aa).

Y22 serves as the catalytic Proton acceptor. Substrate contacts are provided by N73, H79, and D86. H99 (proton donor) is an active-site residue. Substrate-binding positions include 100–101 (LS) and R110.

Belongs to the type-II 3-dehydroquinase family. Homododecamer.

The enzyme catalyses 3-dehydroquinate = 3-dehydroshikimate + H2O. It functions in the pathway metabolic intermediate biosynthesis; chorismate biosynthesis; chorismate from D-erythrose 4-phosphate and phosphoenolpyruvate: step 3/7. In terms of biological role, catalyzes a trans-dehydration via an enolate intermediate. This chain is 3-dehydroquinate dehydratase, found in Synechococcus sp. (strain CC9902).